Here is a 395-residue protein sequence, read N- to C-terminus: Immunity-related GTPase family M protein 2 (395 aa).

Residues 63-239 (NKIKIAVTGD…PKLRETLQKD (177 aa)) form the IRG-type G domain. Residues 72 to 79 (DSGNGMSS), 97 to 101 (TGVVR), and 179 to 181 (KLD) each bind GTP.

The protein belongs to the TRAFAC class dynamin-like GTPase superfamily. IRG family. Ubiquitinated; polyubiquitinated in the cytosol, promoting Gbp1 recruitment to the T.gondii parasitophorous vacuole membranes.

The protein localises to the cytoplasmic vesicle membrane. It is found in the golgi apparatus membrane. It localises to the cytoplasm. The protein resides in the cytosol. It catalyses the reaction GTP + H2O = GDP + phosphate + H(+). Its function is as follows. Immunity-related GTPase that plays important roles in innate immunity and inflammatory response. Acts as a dynamin-like protein that binds to intracellular membranes and promotes remodeling and trafficking of those membranes. Required for clearance of acute protozoan and bacterial infections. Acts by participating to Tgtp1/Irgb6 and Gbp1-mediated parasite killing by promoting their accumulation on the T.gondii parasitophorous vacuole membranes. Also required for prolonged loading of ubiquitin and p62/Sqstm1 to parasitophorous vacuole membranes. Also acts as a key negative regulator of the inflammatory response by inhibiting the non-canonical inflammasome, thereby protecting against Casp11-driven septic shock during endotoxemia. The sequence is that of Immunity-related GTPase family M protein 2 from Mus musculus (Mouse).